A 232-amino-acid polypeptide reads, in one-letter code: Octanoyltransferase (232 aa).

One can recognise a BPL/LPL catalytic domain in the interval 32-219; that stretch reads DTIYDTLILL…SFMVFNFSSC (188 aa). Substrate is bound by residues 77-84, 140-142, and 153-155; these read RGGDITYH, AIG, and GFA. Residue Cys-171 is the Acyl-thioester intermediate of the active site.

This sequence belongs to the LipB family.

Its subcellular location is the cytoplasm. It carries out the reaction octanoyl-[ACP] + L-lysyl-[protein] = N(6)-octanoyl-L-lysyl-[protein] + holo-[ACP] + H(+). The protein operates within protein modification; protein lipoylation via endogenous pathway; protein N(6)-(lipoyl)lysine from octanoyl-[acyl-carrier-protein]: step 1/2. In terms of biological role, catalyzes the transfer of endogenously produced octanoic acid from octanoyl-acyl-carrier-protein onto the lipoyl domains of lipoate-dependent enzymes. Lipoyl-ACP can also act as a substrate although octanoyl-ACP is likely to be the physiological substrate. The polypeptide is Octanoyltransferase (Dictyoglomus thermophilum (strain ATCC 35947 / DSM 3960 / H-6-12)).